We begin with the raw amino-acid sequence, 544 residues long: GMP synthase [glutamine-hydrolyzing] (544 aa).

The Glutamine amidotransferase type-1 domain maps to 12-210 (TILILDFGSQ…VKNVCSVRDG (199 aa)). Cys88 (nucleophile) is an active-site residue. Catalysis depends on residues His184 and Glu186. One can recognise a GMPS ATP-PPase domain in the interval 211–419 (WSMESFIPKE…LNIPEHLVGR (209 aa)). 239-245 (SGGVDST) provides a ligand contact to ATP. The XMP site is built by Arg312, Asp481, Lys536, and Glu542.

Homodimer. Also forms a small population of homotetramers. It depends on Mg(2+) as a cofactor.

Its subcellular location is the cytoplasm. The protein localises to the cytosol. It catalyses the reaction XMP + L-glutamine + ATP + H2O = GMP + L-glutamate + AMP + diphosphate + 2 H(+). Its pathway is purine metabolism; GMP biosynthesis; GMP from XMP (L-Gln route): step 1/1. Its function is as follows. Catalyzes the conversion of xanthine monophosphate (XMP) to GMP in the presence of glutamine and ATP through an adenyl-XMP intermediate. The chain is GMP synthase [glutamine-hydrolyzing] from Cryptococcus neoformans var. neoformans serotype D (strain JEC21 / ATCC MYA-565) (Filobasidiella neoformans).